Reading from the N-terminus, the 201-residue chain is GTP cyclohydrolase 1 (201 aa).

3 residues coordinate Zn(2+): cysteine 90, histidine 93, and cysteine 163.

It belongs to the GTP cyclohydrolase I family. In terms of assembly, toroid-shaped homodecamer, composed of two pentamers of five dimers.

The enzyme catalyses GTP + H2O = 7,8-dihydroneopterin 3'-triphosphate + formate + H(+). The protein operates within cofactor biosynthesis; 7,8-dihydroneopterin triphosphate biosynthesis; 7,8-dihydroneopterin triphosphate from GTP: step 1/1. The chain is GTP cyclohydrolase 1 (folE) from Streptomyces coelicolor (strain ATCC BAA-471 / A3(2) / M145).